Consider the following 332-residue polypeptide: Glyceraldehyde-3-phosphate dehydrogenase 1 (332 aa).

NAD(+) contacts are provided by Arg-11, Ile-12, Asp-33, and Thr-120. Residues 149 to 151, Thr-180, 209 to 210, and Arg-232 contribute to the D-glyceraldehyde 3-phosphate site; these read SCT and TG. The Nucleophile role is filled by Cys-150. Residues Asn-314 and Tyr-318 each contribute to the NAD(+) site.

The protein belongs to the glyceraldehyde-3-phosphate dehydrogenase family. As to quaternary structure, homotetramer.

The protein localises to the cytoplasm. The catalysed reaction is D-glyceraldehyde 3-phosphate + phosphate + NAD(+) = (2R)-3-phospho-glyceroyl phosphate + NADH + H(+). It carries out the reaction NADH + H2O = (6R)-NADHX. The enzyme catalyses NADH + H2O = (6S)-NADHX. It catalyses the reaction NADPH + H2O = (6R)-NADPHX. The catalysed reaction is NADPH + H2O = (6S)-NADPHX. It participates in carbohydrate degradation; glycolysis; pyruvate from D-glyceraldehyde 3-phosphate: step 1/5. Its function is as follows. Glyceraldehyde-3-phosphate dehydrogenase (GAPDH) involved in glycolysis and gluconeogenesis. Catalyzes the reaction of glyceraldehyde-3-phosphate to 1,3 bis-phosphoglycerate. The contribution of the TDH1, TDH2, and TDH3 to the total glyceraldehyde-3-phosphate dehydrogenase activity is 10-15, 25-30, and 50-60%, respectively. May be involved in a process other than glycolysis because it is synthesized by cells in stationary phase. Functionally, as a side activity, catalyzes the hydration of the nicotinamide ring of NADH or NADPH at the C6 position to give the corresponding hydrates, NADHX and NADPHX, which exist as R and S epimers, that cannot act as electron donors or acceptors and inhibit several dehydrogenases, making them toxic. This is Glyceraldehyde-3-phosphate dehydrogenase 1 from Saccharomyces cerevisiae (strain ATCC 204508 / S288c) (Baker's yeast).